A 1286-amino-acid polypeptide reads, in one-letter code: MRRKGTKPSTACHQEEGPPPSQDGAHSDEEMEQPAGEAESAAPAKPPGEELDNRSLEEILNSIPPPPPPAMASEAGAPRLMITHIVNQNFKSYAGEKVLGPFHKRFSCIIGPNGSGKSNVIDSMLFVFGYRAQKIRSKKLSVLIHNSDEHKDIQSCTVEVHFQKIIDKEGDDYEVLPNSNFYVSRTAYRDSTSVYHISGKKKTFKDVGNLLRSHGIDLDHNRFLILQGEVEQIAMMKPKGQTEHDEGMLEYLEDIIGCGRLNEPIKVLCRRVEILNEHRGEKLNRVKMVEKEKDALEGEKNIAIEFLTLENEMFKKKNHICQYYIYDLQNRIAEITTQKEKIHEDTKEITEKSNVLSNEMKAKNSAVKDVEKKLNKVTKFIEQNKEKFTQLDLEDVQVREKLKHATSKAKKLEKQLQKDKEKVEELKSVPAKSKTVINETTTRNNSLEKEREKEEKKLKEVMDSLKQETQGLQKEKEIQEKELMGFNKSVNEARSKMEVAQSELDIYLSRHNTAVSQLSKAKEALITASETLKERKAAIKDINTKLPQTQQELKEKEKELQKLTQEEINLKSLVHDLFQKVEEAKSSLAMNRSRGKVLDAIIQEKKSGRIPGIYGRLGDLGAIDEKYDIAISSCCHALDYIVVDSIDTAQECVNFLKKHNIGIATFIGLDKMTVWAKKMSKIQTPENTPRLFDLVKVKNEEIRQAFYFALRDTLVANNLDQATRVAYQRDRRWRVVTLQGQIIEQSGTMSGGGSKVMRGRMGSSVIDEISVEEVNKMESQLERHSKQAMQIQEQKVQHEEAVVKLRHSERDMRNTLEKFAASIQGLSEQEEYLCVQIKELEANVLTTAPDRKQQKLLEENVSVFKKEYDAVAEKAGKVEAEIKRLHNTIIDINNRKLKAQQNKLDTINKQLDECASAITKAQVAIKTADRNLKKAQDSVCRTEKEIKDTEKEINDLKTELKNIEDKAEEVINNTKTAETSLPEIQKEHRNLLQELKVIQENEHALQKDALSIKLKLEQIDGHISEHNSKIKYWQKEISKIKLHPVEDNPVETVAVLSQEELEAIKNPESITNEIALLEAQCREMKPNLGAIAEYKKKEDLYLQRVAELDKITSERDNFRQAYEDLRKQRLNEFMAGFYVITNKLKENYQMLTLGGDAELELVDSLDPFSEGIMFSVRPPKKSWKKIFNLSGGEKTLSSLALVFALHHYKPTPLYFMDEIDAALDFKNVSIVAFYIYEQTKNAQFIIISLRNNMFEISDRLIGIYKTYNSTKSVAVNPKQIASKGLC.

The tract at residues 1–51 (MRRKGTKPSTACHQEEGPPPSQDGAHSDEEMEQPAGEAESAAPAKPPGEEL) is disordered. A phosphoserine mark is found at serine 21, serine 27, and serine 40. 111 to 118 (GPNGSGKS) lines the ATP pocket. Serine 141 carries the post-translational modification Phosphoserine. A coiled-coil region spans residues 270 to 589 (RRVEILNEHR…KVEEAKSSLA (320 aa)). An N6-acetyllysine mark is found at lysine 379 and lysine 677. The 115-residue stretch at 611–725 (PGIYGRLGDL…ANNLDQATRV (115 aa)) folds into the SMC hinge domain. 2 coiled-coil regions span residues 768–1018 (EISV…KLEQ) and 1068–1133 (ESIT…LNEF). Serine 980 is subject to Phosphoserine.

Belongs to the SMC family. SMC4 subfamily. As to quaternary structure, forms a heterodimer with SMC2. Component of the condensin complex, which contains the SMC2 and SMC4 heterodimer, and three non SMC subunits that probably regulate the complex: BRRN1/CAPH, CNAP1/CAPD2 and CAPG.

Its subcellular location is the nucleus. It is found in the cytoplasm. The protein resides in the chromosome. In terms of biological role, central component of the condensin complex, a complex required for conversion of interphase chromatin into mitotic-like condense chromosomes. The condensin complex probably introduces positive supercoils into relaxed DNA in the presence of type I topoisomerases and converts nicked DNA into positive knotted forms in the presence of type II topoisomerases. This chain is Structural maintenance of chromosomes protein 4 (Smc4), found in Mus musculus (Mouse).